Reading from the N-terminus, the 755-residue chain is Polyribonucleotide nucleotidyltransferase (755 aa).

2 residues coordinate Mg(2+): Asp527 and Asp533. In terms of domain architecture, KH spans 593–652 (PRITTIKVPVDKIGEVIGPKGKMINSITEETGANISIEDDGTVFVGAADGASAQAAIDKI). One can recognise an S1 motif domain in the interval 664 to 733 (GERFLGTVVK…NRGKISLVPV (70 aa)). The disordered stretch occupies residues 734–755 (GEEDAAEAPAPAEAQPADAVTQ). Residues 740–755 (EAPAPAEAQPADAVTQ) show a composition bias toward low complexity.

The protein belongs to the polyribonucleotide nucleotidyltransferase family. Mg(2+) is required as a cofactor.

Its subcellular location is the cytoplasm. It carries out the reaction RNA(n+1) + phosphate = RNA(n) + a ribonucleoside 5'-diphosphate. In terms of biological role, involved in mRNA degradation. Catalyzes the phosphorolysis of single-stranded polyribonucleotides processively in the 3'- to 5'-direction. In Mycobacteroides abscessus (strain ATCC 19977 / DSM 44196 / CCUG 20993 / CIP 104536 / JCM 13569 / NCTC 13031 / TMC 1543 / L948) (Mycobacterium abscessus), this protein is Polyribonucleotide nucleotidyltransferase.